The following is a 998-amino-acid chain: DNA damage-induced apoptosis suppressor protein (998 aa).

Positions 815–834 (DKQQASPSCPKNIKTPSQKI) are disordered. Residues 817–834 (QQASPSCPKNIKTPSQKI) are compositionally biased toward polar residues.

Highly expressed in colorectal and lung cancer tissues.

It is found in the cytoplasm. The protein resides in the nucleus. In terms of biological role, may be an anti-apoptotic protein involved in DNA repair or cell survival. This chain is DNA damage-induced apoptosis suppressor protein (DDIAS), found in Homo sapiens (Human).